The following is a 285-amino-acid chain: Inositol oxygenase (285 aa).

R29 is a binding site for substrate. The residue at position 33 (S33) is a Phosphoserine. 85-88 contacts substrate; that stretch reads DESD. Fe cation is bound by residues H98, H123, and D124. Residues K127 and 141–142 contribute to the substrate site; that span reads GD. Fe cation-binding residues include H194, H220, and D253. 220-221 provides a ligand contact to substrate; sequence HS.

The protein belongs to the myo-inositol oxygenase family. The cofactor is Fe cation. Kidney specific. Renal proximal tubules.

Its subcellular location is the cytoplasm. It carries out the reaction myo-inositol + O2 = D-glucuronate + H2O + H(+). The protein operates within polyol metabolism; myo-inositol degradation into D-glucuronate; D-glucuronate from myo-inositol: step 1/1. The chain is Inositol oxygenase (Miox) from Mus musculus (Mouse).